We begin with the raw amino-acid sequence, 492 residues long: Cytoplasmic dynein 1 light intermediate chain 2 (492 aa).

Position 61–68 (Gly61–Thr68) interacts with ATP. Disordered regions lie at residues Pro187 to Asp206, Ala371 to Ala423, and Leu437 to Ala492. A Phosphoserine modification is found at Ser194. The span at Ala371–Ser381 shows a compositional bias: polar residues. Residues Ser383 and Ser391 each carry the phosphoserine modification. Arg397 carries the post-translational modification Omega-N-methylarginine. Thr441 carries the post-translational modification Phosphothreonine. Phosphoserine occurs at positions 443 and 446. Residues Val452 to Gln469 are compositionally biased toward polar residues. Basic and acidic residues predominate over residues Glu471 to Asp480. Polar residues predominate over residues Met482–Ala492.

This sequence belongs to the dynein light intermediate chain family. As to quaternary structure, homodimer. The cytoplasmic dynein 1 complex consists of two catalytic heavy chains (HCs) and a number of non-catalytic subunits presented by intermediate chains (ICs), light intermediate chains (LICs) and light chains (LCs); the composition seems to vary in respect to the IC, LIC and LC composition. The heavy chain homodimer serves as a scaffold for the probable homodimeric assembly of the respective non-catalytic subunits. The ICs and LICs bind directly to the HC dimer and the LCs assemble on the IC dimer. Interacts with DYNC1H1; DYNC1LI1 and DYNC1LI2 bind mutually exclusive to DYNC1H.

The protein resides in the cytoplasm. The protein localises to the cytoskeleton. Its function is as follows. Acts as one of several non-catalytic accessory components of the cytoplasmic dynein 1 complex that are thought to be involved in linking dynein to cargos and to adapter proteins that regulate dynein function. Cytoplasmic dynein 1 acts as a motor for the intracellular retrograde motility of vesicles and organelles along microtubules. May play a role in binding dynein to membranous organelles or chromosomes. In Pongo abelii (Sumatran orangutan), this protein is Cytoplasmic dynein 1 light intermediate chain 2 (DYNC1LI2).